The primary structure comprises 173 residues: RNA polymerase sigma factor YlaC (173 aa).

The protein belongs to the sigma-70 factor family. ECF subfamily.

Its function is as follows. Sigma factors are initiation factors that promote the attachment of RNA polymerase to specific initiation sites and are then released. This sigma factor contributes to oxidative stress resistance. This is RNA polymerase sigma factor YlaC (ylaC) from Bacillus subtilis (strain 168).